The following is a 148-amino-acid chain: 18 kDa antigen (148 aa).

In terms of domain architecture, sHSP spans 21 to 131; that stretch reads TSARPAVMPM…KPRKISVDRG (111 aa).

Belongs to the small heat shock protein (HSP20) family.

Its function is as follows. Not known. This protein is one of the major immune reactive proteins in mycobacteria. This chain is 18 kDa antigen (hsp18), found in Mycobacterium leprae (strain TN).